A 724-amino-acid chain; its full sequence is Catalase-peroxidase (724 aa).

The tryptophyl-tyrosyl-methioninium (Trp-Tyr) (with M-251) cross-link spans Trp-96–Tyr-225. Catalysis depends on His-97, which acts as the Proton acceptor. Residues Tyr-225–Met-251 constitute a cross-link (tryptophyl-tyrosyl-methioninium (Tyr-Met) (with W-96)). His-266 is a heme b binding site.

The protein belongs to the peroxidase family. Peroxidase/catalase subfamily. In terms of assembly, homodimer or homotetramer. Requires heme b as cofactor. Formation of the three residue Trp-Tyr-Met cross-link is important for the catalase, but not the peroxidase activity of the enzyme.

It carries out the reaction H2O2 + AH2 = A + 2 H2O. The catalysed reaction is 2 H2O2 = O2 + 2 H2O. Functionally, bifunctional enzyme with both catalase and broad-spectrum peroxidase activity. In Halorhodospira halophila (strain DSM 244 / SL1) (Ectothiorhodospira halophila (strain DSM 244 / SL1)), this protein is Catalase-peroxidase.